Consider the following 144-residue polypeptide: MRHYEIIFIVHPDQSEQVSAMIERYSNMITERSGGIHRLEDWGRRQLTYPIQKLHKAHYILMNIECDQESLNELEHSFKFNDAILRHLVIRMNGPVTTPSPMMQDDKSKPDENSRGTAAPTVNVADDSASGAQVVAAEENDTQS.

A disordered region spans residues 95–144 (PVTTPSPMMQDDKSKPDENSRGTAAPTVNVADDSASGAQVVAAEENDTQS). Positions 104–114 (QDDKSKPDENS) are enriched in basic and acidic residues.

Belongs to the bacterial ribosomal protein bS6 family.

Binds together with bS18 to 16S ribosomal RNA. In Nitrosomonas eutropha (strain DSM 101675 / C91 / Nm57), this protein is Small ribosomal subunit protein bS6.